The chain runs to 148 residues: Large ribosomal subunit protein bL9 (148 aa).

It belongs to the bacterial ribosomal protein bL9 family.

Its function is as follows. Binds to the 23S rRNA. The protein is Large ribosomal subunit protein bL9 of Pseudomonas fluorescens (strain ATCC BAA-477 / NRRL B-23932 / Pf-5).